The following is a 439-amino-acid chain: GTPase Der (439 aa).

EngA-type G domains are found at residues 2–168 and 181–357; these read ATVL…EEKG and IKVA…ASYT. Residues 8 to 15, 55 to 59, 118 to 121, 187 to 194, 234 to 238, and 300 to 303 contribute to the GTP site; these read GKPNVGKS, DTCGV, NKTE, GRPNVGKS, DTAGL, and NKWD. Positions 358 to 439 constitute a KH-like domain; it reads TKVPSSAINS…PIFLKFKRSR (82 aa).

The protein belongs to the TRAFAC class TrmE-Era-EngA-EngB-Septin-like GTPase superfamily. EngA (Der) GTPase family. As to quaternary structure, associates with the 50S ribosomal subunit.

In terms of biological role, GTPase that plays an essential role in the late steps of ribosome biogenesis. The chain is GTPase Der from Thermotoga petrophila (strain ATCC BAA-488 / DSM 13995 / JCM 10881 / RKU-1).